A 263-amino-acid polypeptide reads, in one-letter code: UPF0246 protein Strop_2927 (263 aa).

It belongs to the UPF0246 family.

This is UPF0246 protein Strop_2927 from Salinispora tropica (strain ATCC BAA-916 / DSM 44818 / JCM 13857 / NBRC 105044 / CNB-440).